A 474-amino-acid chain; its full sequence is tRNA-2-methylthio-N(6)-dimethylallyladenosine synthase (474 aa).

One can recognise an MTTase N-terminal domain in the interval 3–120 (KKLHIKTWGC…LPDMIEQVRR (118 aa)). Residues C12, C49, C83, C157, C161, and C164 each coordinate [4Fe-4S] cluster. A Radical SAM core domain is found at 143 to 375 (RAEGPTAFVS…QDRITQQAMR (233 aa)). In terms of domain architecture, TRAM spans 378–441 (RHMMGTVQRI…TNSLRGKFIR (64 aa)).

This sequence belongs to the methylthiotransferase family. MiaB subfamily. Monomer. The cofactor is [4Fe-4S] cluster.

Its subcellular location is the cytoplasm. It carries out the reaction N(6)-dimethylallyladenosine(37) in tRNA + (sulfur carrier)-SH + AH2 + 2 S-adenosyl-L-methionine = 2-methylsulfanyl-N(6)-dimethylallyladenosine(37) in tRNA + (sulfur carrier)-H + 5'-deoxyadenosine + L-methionine + A + S-adenosyl-L-homocysteine + 2 H(+). Functionally, catalyzes the methylthiolation of N6-(dimethylallyl)adenosine (i(6)A), leading to the formation of 2-methylthio-N6-(dimethylallyl)adenosine (ms(2)i(6)A) at position 37 in tRNAs that read codons beginning with uridine. This is tRNA-2-methylthio-N(6)-dimethylallyladenosine synthase from Shewanella sp. (strain MR-7).